A 262-amino-acid chain; its full sequence is GTP cyclohydrolase 1 type 2 homolog (262 aa).

5 residues coordinate a divalent metal cation: histidine 68, histidine 69, aspartate 108, histidine 226, and glutamate 229.

This sequence belongs to the GTP cyclohydrolase I type 2/NIF3 family. In terms of assembly, homohexamer.

The sequence is that of GTP cyclohydrolase 1 type 2 homolog from Ureaplasma parvum serovar 3 (strain ATCC 700970).